Reading from the N-terminus, the 128-residue chain is ADA histone acetyltransferase complex component 2 (128 aa).

It is found in the cytoplasm. It localises to the nucleus. The chain is ADA histone acetyltransferase complex component 2 (AHC2) from Saccharomyces cerevisiae (strain ATCC 204508 / S288c) (Baker's yeast).